A 73-amino-acid chain; its full sequence is Disintegrin lachesin (73 aa).

Residues 1 to 73 form the Disintegrin domain; that stretch reads EAGEECDCGA…ADCPRNGYYG (73 aa). Cystine bridges form between Cys-6/Cys-21, Cys-8/Cys-16, Cys-15/Cys-38, Cys-29/Cys-35, Cys-34/Cys-59, and Cys-47/Cys-66. The Cell attachment site signature appears at 51 to 53; it reads RGD. A disordered region spans residues 51 to 73; it reads RGDNPDDRCTGQSADCPRNGYYG.

This sequence belongs to the venom metalloproteinase (M12B) family. P-II subfamily. P-IIa sub-subfamily. Monomer (disintegrin). As to expression, expressed by the venom gland.

The protein resides in the secreted. Functionally, inhibits fibrinogen interaction with platelets. Acts by binding to alpha-IIb/beta-3 (ITGA2B/ITGB3) on the platelet surface and inhibits aggregation induced by ADP, thrombin, platelet-activating factor and collagen. The sequence is that of Disintegrin lachesin from Lachesis muta muta (Bushmaster).